The primary structure comprises 249 residues: uncharacterized protein (249 aa).

A coiled-coil region spans residues 30-65 (KVDKLKKLEIKKLEDQKKLKEQEEKHRLTLIRLANA). Residues 66–97 (PPQTNSINNNNNNNNNIKTNRPPLIYGEDKDK) are disordered.

This is an uncharacterized protein from Dictyostelium discoideum (Social amoeba).